The sequence spans 91 residues: Elongation factor 1-beta (91 aa).

Belongs to the EF-1-beta/EF-1-delta family.

Promotes the exchange of GDP for GTP in EF-1-alpha/GDP, thus allowing the regeneration of EF-1-alpha/GTP that could then be used to form the ternary complex EF-1-alpha/GTP/AAtRNA. The polypeptide is Elongation factor 1-beta (Saccharolobus islandicus (strain Y.N.15.51 / Yellowstone #2) (Sulfolobus islandicus)).